A 1175-amino-acid chain; its full sequence is Chromosome partition protein Smc (1175 aa).

Position 32-39 (32-39 (PNGCGKSN)) interacts with ATP. The stretch at 170-504 (VSKYKERRRE…ALKALQEKVK (335 aa)) forms a coiled coil. In terms of domain architecture, SMC hinge spans 524-625 (LWSRIAIEPG…YTAPTLEEAL (102 aa)). 2 coiled-coil regions span residues 684–918 (DESR…FQLK) and 944–1022 (SQSI…ELLS). A disordered region spans residues 807–849 (RQAQEATFSRRSLEARRGELSRTIETASQQARSLADEQQRAQD). Residues 817–828 (RSLEARRGELSR) are compositionally biased toward basic and acidic residues. Residues 829 to 838 (TIETASQQAR) show a composition bias toward polar residues. Positions 840–849 (LADEQQRAQD) are enriched in basic and acidic residues.

The protein belongs to the SMC family. In terms of assembly, homodimer.

It is found in the cytoplasm. Required for chromosome condensation and partitioning. The polypeptide is Chromosome partition protein Smc (Delftia acidovorans (strain DSM 14801 / SPH-1)).